The sequence spans 211 residues: Uridine kinase (211 aa).

Residue 13 to 20 (GASASGKS) participates in ATP binding.

Belongs to the uridine kinase family.

The protein localises to the cytoplasm. It carries out the reaction uridine + ATP = UMP + ADP + H(+). The catalysed reaction is cytidine + ATP = CMP + ADP + H(+). It participates in pyrimidine metabolism; CTP biosynthesis via salvage pathway; CTP from cytidine: step 1/3. The protein operates within pyrimidine metabolism; UMP biosynthesis via salvage pathway; UMP from uridine: step 1/1. In Shewanella pealeana (strain ATCC 700345 / ANG-SQ1), this protein is Uridine kinase.